The chain runs to 475 residues: Nucleoporin-like protein amo1 (475 aa).

The C3H1-type zinc finger occupies 1 to 25; it reads MVVCKYFLQNRCRYGTNCKNQHTVP. The span at 165–182 shows a compositional bias: polar residues; it reads DKSTSNSTVTSNQFNKPT. 2 disordered regions span residues 165–208 and 220–252; these read DKST…DIFG and NASP…SSFG. Positions 183 to 204 are enriched in low complexity; the sequence is QNSPFNSFSNNNNSFNNNQQAN. Polar residues predominate over residues 220-242; it reads NASPFSQNTSSNSFTGSNPVQNN. Residues 243–252 are compositionally biased toward low complexity; that stretch reads PSSFGSSSFG.

The protein resides in the nucleus. Functionally, involved in the cell polarity process where it is required for the correct termination of microtubule growth at the cell ends during interphase. This Schizosaccharomyces pombe (strain 972 / ATCC 24843) (Fission yeast) protein is Nucleoporin-like protein amo1 (amo1).